Reading from the N-terminus, the 417-residue chain is Serine hydroxymethyltransferase (417 aa).

(6S)-5,6,7,8-tetrahydrofolate is bound by residues Leu-122 and 126 to 128 (GHL). Lys-230 is subject to N6-(pyridoxal phosphate)lysine. 355 to 357 (SPF) serves as a coordination point for (6S)-5,6,7,8-tetrahydrofolate.

It belongs to the SHMT family. Homodimer. The cofactor is pyridoxal 5'-phosphate.

It is found in the cytoplasm. It catalyses the reaction (6R)-5,10-methylene-5,6,7,8-tetrahydrofolate + glycine + H2O = (6S)-5,6,7,8-tetrahydrofolate + L-serine. It participates in one-carbon metabolism; tetrahydrofolate interconversion. It functions in the pathway amino-acid biosynthesis; glycine biosynthesis; glycine from L-serine: step 1/1. Catalyzes the reversible interconversion of serine and glycine with tetrahydrofolate (THF) serving as the one-carbon carrier. This reaction serves as the major source of one-carbon groups required for the biosynthesis of purines, thymidylate, methionine, and other important biomolecules. Also exhibits THF-independent aldolase activity toward beta-hydroxyamino acids, producing glycine and aldehydes, via a retro-aldol mechanism. The chain is Serine hydroxymethyltransferase from Francisella tularensis subsp. novicida (strain U112).